The primary structure comprises 329 residues: Malate dehydrogenase (329 aa).

12–18 lines the NAD(+) pocket; it reads GAAGQIG. Residues arginine 93 and arginine 99 each contribute to the substrate site. NAD(+)-binding positions include asparagine 106, glutamine 113, and 130–132; that span reads TGN. Positions 132 and 163 each coordinate substrate. Catalysis depends on histidine 188, which acts as the Proton acceptor.

Belongs to the LDH/MDH superfamily. MDH type 2 family.

The enzyme catalyses (S)-malate + NAD(+) = oxaloacetate + NADH + H(+). Functionally, catalyzes the reversible oxidation of malate to oxaloacetate. In Mycolicibacterium paratuberculosis (strain ATCC BAA-968 / K-10) (Mycobacterium paratuberculosis), this protein is Malate dehydrogenase.